The primary structure comprises 386 residues: Glucose-1-phosphate adenylyltransferase (386 aa).

Residues Tyr100, Gly165, 180–181, and Ser191 each bind alpha-D-glucose 1-phosphate; that span reads EK.

Belongs to the bacterial/plant glucose-1-phosphate adenylyltransferase family. In terms of assembly, homotetramer.

It catalyses the reaction alpha-D-glucose 1-phosphate + ATP + H(+) = ADP-alpha-D-glucose + diphosphate. The protein operates within glycan biosynthesis; glycogen biosynthesis. Its function is as follows. Involved in the biosynthesis of ADP-glucose, a building block required for the elongation reactions to produce glycogen. Catalyzes the reaction between ATP and alpha-D-glucose 1-phosphate (G1P) to produce pyrophosphate and ADP-Glc. In Clostridium botulinum (strain Alaska E43 / Type E3), this protein is Glucose-1-phosphate adenylyltransferase.